A 357-amino-acid polypeptide reads, in one-letter code: uncharacterized protein (357 aa).

3 helical membrane-spanning segments follow: residues 21-41 (FIKIIEFWFYLIQILTVLFSW), 86-106 (FFCLFTDTLYFMMLIITCTLF), and 135-155 (GGFVEFGSFTVLLLLKWPVIF). 2 disordered regions span residues 184 to 229 (DKNK…AMSD) and 283 to 357 (KAGS…NKRN). Positions 195 to 223 (TTNTTNFSGNGSSSSTTNATSSSSSQANN) are enriched in low complexity. Basic and acidic residues-rich tracts occupy residues 305-314 (KIEEYDNQKQ) and 322-337 (KETNKQQTQKDDEKET). The stretch at 305-337 (KIEEYDNQKQEEEENEEKETNKQQTQKDDEKET) forms a coiled coil. Basic residues predominate over residues 346-357 (KKSKKGKKNKRN).

The protein resides in the membrane. This is an uncharacterized protein from Dictyostelium discoideum (Social amoeba).